A 292-amino-acid chain; its full sequence is Protease HtpX homolog (292 aa).

The next 2 helical transmembrane spans lie at 7–27 and 29–49; these read TFILMAALTALVMGMGGLIGG and GGAVIALAIAGAGNLFAWWNS. H131 contacts Zn(2+). E132 is an active-site residue. A Zn(2+)-binding site is contributed by H135. A run of 2 helical transmembrane segments spans residues 148 to 168 and 178 to 198; these read ATMAGAIAMLGNMLMFSSMFG and LAAILAMIFAPMAAGLVQMAI. A Zn(2+)-binding site is contributed by E203.

This sequence belongs to the peptidase M48B family. Requires Zn(2+) as cofactor.

The protein resides in the cell inner membrane. In Paracoccus denitrificans (strain Pd 1222), this protein is Protease HtpX homolog.